A 173-amino-acid polypeptide reads, in one-letter code: Myosin light chain 5 (173 aa).

The tract at residues 1-22 (MASRKTKKKEGGGLRAQRASSN) is disordered. EF-hand domains follow at residues 30–65 (TQIQEFKEAFTLMDQNRDGFIDKEDLKDTYASLGKT), 100–135 (DAEETILNAFKMLDPEGKGSINKDYIKRLLMSQADK), and 136–171 (MTAEEVDQMFQFATIDAAGNLDYKALSYVLTHGEEK). Ca(2+) is bound by residues Asp43, Asn45, Asp47, and Asp54.

Myosin is a hexamer of 2 heavy chains and 4 light chains. Jaw-closing muscles.

The chain is Myosin light chain 5 (MYL5) from Felis catus (Cat).